The primary structure comprises 39 residues: Large ribosomal subunit protein bL36 (39 aa).

The protein belongs to the bacterial ribosomal protein bL36 family.

In Leuconostoc mesenteroides subsp. mesenteroides (strain ATCC 8293 / DSM 20343 / BCRC 11652 / CCM 1803 / JCM 6124 / NCDO 523 / NBRC 100496 / NCIMB 8023 / NCTC 12954 / NRRL B-1118 / 37Y), this protein is Large ribosomal subunit protein bL36.